The following is a 317-amino-acid chain: Zinc transporter ZIP3 (317 aa).

Residues 1–3 are Extracellular-facing; the sequence is MTK. Residues 4–24 form a helical membrane-spanning segment; the sequence is LLVAKVLCMVGVFFFMLLGSL. The Cytoplasmic segment spans residues 25–42; that stretch reads LPVKVIEADLEKAHRSKK. A helical transmembrane segment spans residues 43–63; sequence VLSLCNTFGGGVFLATCFNAL. Residues 64–85 lie on the Extracellular side of the membrane; that stretch reads LPAVRDKLQQVLSLGHISTDYP. The chain crosses the membrane as a helical span at residues 86-106; it reads LAETLMMVGFFLTVFVEQLVL. Topologically, residues 107-172 are cytoplasmic; the sequence is TFRRERPPFI…RELGRPGPLR (66 aa). 2 positions are modified to phosphoserine: S125 and S129. Residues 173-193 traverse the membrane as a helical segment; sequence LLSLVFALSAHSVFEGLALGL. Residues 194–199 lie on the Extracellular side of the membrane; that stretch reads QEEGER. The helical transmembrane segment at 200–220 threads the bilayer; that stretch reads VVSLFVGVAIHETLVAVALGI. Residues 221–232 lie on the Cytoplasmic side of the membrane; it reads SMARSAVPLRDA. A helical membrane pass occupies residues 233 to 253; that stretch reads AKLAVTVSAMIPVGIGLGLGI. The Extracellular segment spans residues 254–265; sequence ESARSVASSVAS. A helical membrane pass occupies residues 266–286; that stretch reads ALLQGLAGGTFLFVTFLEILA. Over 287-294 the chain is Cytoplasmic; sequence KELEERSE. The chain crosses the membrane as a helical span at residues 295-315; that stretch reads QLLKVLFLVLGYAVLAGMVFL. Residues 316–317 are Extracellular-facing; it reads KW.

Belongs to the ZIP transporter (TC 2.A.5) family. Highly expressed in the testes. Highly expressed in dentate gyrus granule cells of the hippocampus. Expressed in the mammary gland.

It is found in the cell membrane. The protein localises to the apical cell membrane. The enzyme catalyses Zn(2+)(in) = Zn(2+)(out). Transporter for the divalent cation Zn(2+). Mediates the influx of Zn(2+) into cells from extracellular space. Controls Zn(2+) accumulation into dentate gyrus granule cells in the hippocampus. Mediates Zn(2+) reuptake from the secreted milk within the alveolar lumen. The protein is Zinc transporter ZIP3 (Slc39a3) of Mus musculus (Mouse).